A 241-amino-acid polypeptide reads, in one-letter code: 2-C-methyl-D-erythritol 4-phosphate cytidylyltransferase (241 aa).

It belongs to the IspD/TarI cytidylyltransferase family. IspD subfamily.

The catalysed reaction is 2-C-methyl-D-erythritol 4-phosphate + CTP + H(+) = 4-CDP-2-C-methyl-D-erythritol + diphosphate. It participates in isoprenoid biosynthesis; isopentenyl diphosphate biosynthesis via DXP pathway; isopentenyl diphosphate from 1-deoxy-D-xylulose 5-phosphate: step 2/6. Catalyzes the formation of 4-diphosphocytidyl-2-C-methyl-D-erythritol from CTP and 2-C-methyl-D-erythritol 4-phosphate (MEP). This chain is 2-C-methyl-D-erythritol 4-phosphate cytidylyltransferase, found in Alkaliphilus metalliredigens (strain QYMF).